The sequence spans 272 residues: Large ribosomal subunit protein uL2cz/uL2cy (272 aa).

2 disordered regions span residues 1-33 (MAIH…SGQR) and 220-272 (VMNP…RRSK). The residue at position 2 (Ala-2) is an N-methylalanine. Residues 7 to 30 (KTSTSSTRNGAVQVKSNPRNNLIS) show a composition bias toward polar residues.

It belongs to the universal ribosomal protein uL2 family. In terms of assembly, component of the chloroplast large ribosomal subunit (LSU). Mature 70S chloroplast ribosomes of higher plants consist of a small (30S) and a large (50S) subunit. The 30S small subunit contains 1 molecule of ribosomal RNA (16S rRNA) and 24 different proteins. The 50S large subunit contains 3 rRNA molecules (23S, 5S and 4.5S rRNA) and 33 different proteins.

Its subcellular location is the plastid. The protein resides in the chloroplast. Component of the chloroplast ribosome (chloro-ribosome), a dedicated translation machinery responsible for the synthesis of chloroplast genome-encoded proteins, including proteins of the transcription and translation machinery and components of the photosynthetic apparatus. The polypeptide is Large ribosomal subunit protein uL2cz/uL2cy (rpl2-A) (Spinacia oleracea (Spinach)).